A 310-amino-acid chain; its full sequence is Zinc finger protein 346 (310 aa).

N-acetylmethionine is present on M1. The segment covering 1-12 (MEYPAPAAVQAA) has biased composition (low complexity). Positions 1 to 33 (MEYPAPAAVQAADGGGAGPYNSSELLEGQEPDG) are disordered. The Matrin-type 1 zinc-finger motif lies at 70–104 (FTNTQCKVCCALLISESQKLAHYQSKKHANKVKRY). The Zn(2+) site is built by C75, C78, H91, and H97. K114 is covalently cross-linked (Glycyl lysine isopeptide (Lys-Gly) (interchain with G-Cter in SUMO2)). Residues 131–165 (DKNQCCPICNMTFSSPVVAQSHYLGKTHAKNLKLK) form a Matrin-type 2 zinc finger. Zn(2+) is bound by residues C136, C139, H152, and H158. A Glycyl lysine isopeptide (Lys-Gly) (interchain with G-Cter in SUMO2) cross-link involves residue K170. Matrin-type zinc fingers lie at residues 198 to 232 (DPDK…ETKL) and 252 to 286 (GKGY…SPKT). The interval 278–310 (KHKNQSPKTVASSLGQIPMQRQPIQKDSTTLED) is disordered. 2 stretches are compositionally biased toward polar residues: residues 283–292 (SPKTVASSLG) and 299–310 (QPIQKDSTTLED).

In terms of assembly, forms a heteromeric complex with XPO5 and ILF3. Found in a nuclear export complex with XPO5, RAN, ILF3, ZNF346 and double-stranded RNA. Interacts with XPO5. Interacts with ILF3 in an RNA-independent manner.

The protein resides in the nucleus. The protein localises to the nucleolus. It is found in the cytoplasm. Functionally, binds with low affinity to dsDNA and ssRNA, and with high affinity to dsRNA, with no detectable sequence specificity. The polypeptide is Zinc finger protein 346 (ZNF346) (Pongo abelii (Sumatran orangutan)).